Consider the following 249-residue polypeptide: MKFYKYCASGNDFVIFADSEKKDRSELAKILCNRYEGIGADGLIVIVPHDRYDFEWEFYNCDGSKANMCGNGSRAAAHFAHHHLKKSQYLNFLTGAGLIKSFVDDDIVEIKLSGIKDIKEAFEYKDRIWQGCNTGVPHIVTFVDDLSEFDINLCKEVRKKYNANVNFAKVEDDEFIRVRTYERGVEDETLACGTGMGACFYLAYLNQKVKDDILIKPKSNESLYFRLEEEQIFFRGKVKCCFEADYNFT.

2 residues coordinate substrate: N11 and N60. Residue C69 is the Proton donor of the active site. Residues 70–71 (GN), N164, and 182–183 (ER) each bind substrate. The active-site Proton acceptor is C192. 193–194 (GT) contacts substrate.

The protein belongs to the diaminopimelate epimerase family. Homodimer.

The protein localises to the cytoplasm. The enzyme catalyses (2S,6S)-2,6-diaminopimelate = meso-2,6-diaminopimelate. It functions in the pathway amino-acid biosynthesis; L-lysine biosynthesis via DAP pathway; DL-2,6-diaminopimelate from LL-2,6-diaminopimelate: step 1/1. Catalyzes the stereoinversion of LL-2,6-diaminopimelate (L,L-DAP) to meso-diaminopimelate (meso-DAP), a precursor of L-lysine and an essential component of the bacterial peptidoglycan. The sequence is that of Diaminopimelate epimerase from Campylobacter lari (strain RM2100 / D67 / ATCC BAA-1060).